Consider the following 955-residue polypeptide: Serine-aspartate repeat-containing protein C (955 aa).

A signal peptide spans Met1 to Ala50. The disordered stretch occupies residues Ala51–Arg166. The interval Ala51–Lys495 is ligand binding A region. Residues Gly56–Asn71 show a composition bias toward polar residues. The segment covering Lys72 to Lys83 has biased composition (basic and acidic residues). Positions Asp84 to Pro114 are enriched in polar residues. Residues Gln115–Asn132 show a composition bias toward low complexity. The segment covering Asp133–Lys164 has biased composition (polar residues). 2 consecutive CNA-B domains span residues Lys496–Pro606 and Lys607–Thr717. The segment at Thr678–Gly935 is disordered. Acidic residues-rich tracts occupy residues Thr685–Glu695 and Tyr712–Ser894. The short motif at Leu918–Gly922 is the LPXTG sorting signal element. Positions Glu920–Gly935 are enriched in low complexity. Pentaglycyl murein peptidoglycan amidated threonine is present on Thr921. Residues Gly922 to Lys955 constitute a propeptide, removed by sortase.

Belongs to the serine-aspartate repeat-containing protein (SDr) family. In terms of assembly, homodimerizes; via N2-Domain. Interacts with host NRXN1; this interaction mediates bacterial attachment to host cells.

Its subcellular location is the secreted. The protein resides in the cell wall. Functionally, cell surface-associated calcium-binding protein which plays an important role in adhesion and pathogenesis. Mediates interactions with components of the extracellular matrix such as host NRXN1 to promote bacterial adhesion. The polypeptide is Serine-aspartate repeat-containing protein C (sdrC) (Staphylococcus aureus (strain MW2)).